The following is a 119-amino-acid chain: Aspartate 1-decarboxylase (119 aa).

Ser25 serves as the catalytic Schiff-base intermediate with substrate; via pyruvic acid. A Pyruvic acid (Ser) modification is found at Ser25. Thr57 serves as a coordination point for substrate. The Proton donor role is filled by Tyr58. A substrate-binding site is contributed by 73-75 (GAA).

The protein belongs to the PanD family. In terms of assembly, heterooctamer of four alpha and four beta subunits. Pyruvate is required as a cofactor. In terms of processing, is synthesized initially as an inactive proenzyme, which is activated by self-cleavage at a specific serine bond to produce a beta-subunit with a hydroxyl group at its C-terminus and an alpha-subunit with a pyruvoyl group at its N-terminus.

It is found in the cytoplasm. The catalysed reaction is L-aspartate + H(+) = beta-alanine + CO2. It participates in cofactor biosynthesis; (R)-pantothenate biosynthesis; beta-alanine from L-aspartate: step 1/1. Catalyzes the pyruvoyl-dependent decarboxylation of aspartate to produce beta-alanine. This is Aspartate 1-decarboxylase from Thermosipho melanesiensis (strain DSM 12029 / CIP 104789 / BI429).